The following is a 314-amino-acid chain: Olfactory receptor 1E2 (314 aa).

Topologically, residues 1-25 (MMGQNQTSISDFLLLGLPIQPEQQN) are extracellular. A glycan (N-linked (GlcNAc...) asparagine) is linked at Asn5. A helical transmembrane segment spans residues 26–49 (LCYALFLAMYLTTLLGNLLIIVLI). Residues 50–57 (RLDSHLHT) are Cytoplasmic-facing. Residues 58–79 (PMYLFLSNLSFSDLCFSSVTIP) traverse the membrane as a helical segment. Topologically, residues 80–100 (KLLQNMQNQDPSIPYADCLTQ) are extracellular. A disulfide bridge connects residues Cys97 and Cys189. A helical transmembrane segment spans residues 101–120 (MHFFLLFGDLESFLLVAMAY). Over 121–139 (DRYVAICFPLHYTAIMSPM) the chain is Cytoplasmic. A helical membrane pass occupies residues 140–158 (LCLSVVALSWVLTTFHAML). Residues 159-196 (HTLLMARLCFCADNVIPHFFCDMSALLKLACSDTRVNE) are Extracellular-facing. The helical transmembrane segment at 197-219 (WVIFIMGGLIVVIPFLLILGSYA) threads the bilayer. Residues 220-236 (RIVSSILKVPSFKGICK) are Cytoplasmic-facing. A helical membrane pass occupies residues 237–260 (ALSTCGSHLSVVSLFYGTVIGLYL). The Extracellular segment spans residues 261–272 (CPSANSSTLKDT). A glycan (N-linked (GlcNAc...) asparagine) is linked at Asn265. The helical transmembrane segment at 273-292 (VMAMMYTVVTPMLNPFIYSL) threads the bilayer. Residues 293–314 (RNRDMKGALERVICKRKNPFLL) are Cytoplasmic-facing.

Belongs to the G-protein coupled receptor 1 family.

The protein resides in the cell membrane. Odorant receptor. This Pan troglodytes (Chimpanzee) protein is Olfactory receptor 1E2 (OR1E2).